Consider the following 1168-residue polypeptide: Probable pre-mRNA-splicing factor ATP-dependent RNA helicase DEAH5 (1168 aa).

The interval 76–206 (IYPPKPKSEK…KDEYVEEDKG (131 aa)) is disordered. Composition is skewed to basic and acidic residues over residues 81–172 (PKSE…DRRS) and 180–206 (GRGD…EDKG). The 70-residue stretch at 214–283 (YQVYKGRVTR…SSDKYSLSMR (70 aa)) folds into the S1 motif domain. Residues 289 to 326 (TGRDLIPLRKPSDEDDSSRSNPSYRTKDGQVTKTGISG) are disordered. The residue at position 411 (serine 411) is a Phosphoserine. The Helicase ATP-binding domain maps to 525 to 688 (IQAVHDNQVL…FFNCNIFTIP (164 aa)). 538 to 545 (GETGSGKT) contacts ATP. Positions 635–638 (DEAH) match the DEAH box motif. One can recognise a Helicase C-terminal domain in the interval 706-886 (YLDAALITVL…MTTLTMKAMG (181 aa)).

This sequence belongs to the DEAD box helicase family. DEAH subfamily. PRP22 sub-subfamily.

It localises to the nucleus. It carries out the reaction ATP + H2O = ADP + phosphate + H(+). Functionally, may be involved in pre-mRNA splicing. The sequence is that of Probable pre-mRNA-splicing factor ATP-dependent RNA helicase DEAH5 from Arabidopsis thaliana (Mouse-ear cress).